A 460-amino-acid polypeptide reads, in one-letter code: Bifunctional protein GlmU (460 aa).

The interval M1 to K229 is pyrophosphorylase. UDP-N-acetyl-alpha-D-glucosamine-binding positions include L9–G12, K23, Q74, G79–T80, Y101–D103, G138, E154, N169, and N227. D103 is a binding site for Mg(2+). N227 lines the Mg(2+) pocket. The segment at V230–Q250 is linker. An N-acetyltransferase region spans residues G251–N460. Positions 333 and 351 each coordinate UDP-N-acetyl-alpha-D-glucosamine. H363 (proton acceptor) is an active-site residue. Positions 366 and 377 each coordinate UDP-N-acetyl-alpha-D-glucosamine. Acetyl-CoA is bound by residues A380, N386–Y387, S405, A423, and R440.

This sequence in the N-terminal section; belongs to the N-acetylglucosamine-1-phosphate uridyltransferase family. In the C-terminal section; belongs to the transferase hexapeptide repeat family. As to quaternary structure, homotrimer. Requires Mg(2+) as cofactor.

It is found in the cytoplasm. The catalysed reaction is alpha-D-glucosamine 1-phosphate + acetyl-CoA = N-acetyl-alpha-D-glucosamine 1-phosphate + CoA + H(+). The enzyme catalyses N-acetyl-alpha-D-glucosamine 1-phosphate + UTP + H(+) = UDP-N-acetyl-alpha-D-glucosamine + diphosphate. It participates in nucleotide-sugar biosynthesis; UDP-N-acetyl-alpha-D-glucosamine biosynthesis; N-acetyl-alpha-D-glucosamine 1-phosphate from alpha-D-glucosamine 6-phosphate (route II): step 2/2. The protein operates within nucleotide-sugar biosynthesis; UDP-N-acetyl-alpha-D-glucosamine biosynthesis; UDP-N-acetyl-alpha-D-glucosamine from N-acetyl-alpha-D-glucosamine 1-phosphate: step 1/1. It functions in the pathway bacterial outer membrane biogenesis; LPS lipid A biosynthesis. In terms of biological role, catalyzes the last two sequential reactions in the de novo biosynthetic pathway for UDP-N-acetylglucosamine (UDP-GlcNAc). The C-terminal domain catalyzes the transfer of acetyl group from acetyl coenzyme A to glucosamine-1-phosphate (GlcN-1-P) to produce N-acetylglucosamine-1-phosphate (GlcNAc-1-P), which is converted into UDP-GlcNAc by the transfer of uridine 5-monophosphate (from uridine 5-triphosphate), a reaction catalyzed by the N-terminal domain. The polypeptide is Bifunctional protein GlmU (Nitrosospira multiformis (strain ATCC 25196 / NCIMB 11849 / C 71)).